The primary structure comprises 1069 residues: MSQGRRTNELGWHERMSETAEHGTGAANATASPSGAVPPSGATATAGTGDEPGFRYDARLAADIERRWQRRWADEGTFNSPNPVGPLAAGFDEVAGREPFYIMDMFPYPSGTGLHVGHPLGYIGTDVFARYLRMSGRHVLHPFGYDAFGLPAEQYAINTGQHPRTTTDANIANMRRQLSRLGLGHDTRREIATTDVGYYRWTQWIFEQIFDAWYDPQAGRARPIAELIAEFEAGTRSPAAGPAAGTTAVSVDAVRAANPTGLPWAELDRVTRRRVVDAHRLAYISEQLVNWCPGLGTVLANEEVTAEGRSDIGNYPVFRRPLRQWVLRITAYAERLVDDLDLVDWSDSIKQMQRNWIGPSDGAGVEFAVVPPSGSAGAAPGQRIEVYTTRPDTLAGATFLVLAPEHPQVDALVADAWPAGTPGAWRFPAGRGPAVGEAAEVAAEEVAAEEVGAAEVEAAAADPAWTPRAAVEAYRAFAARRSDRQRGEEVDRTGVFTGAYVRNPVGGGLLPVFLADYVLVGYGTGAIMAVPAHDSRDFSFARAFDLPIPAVLAPDEQWYAEHRVTPGAPPSAWPEAFGGEGAYLPGPAGTPVLAGLTKPDAIKTTVRWLEDGGHGRLARSYRLRDWLFSRQRYWGEPFPIVFDDDGLPYAVPDELLPVELPEMTDFRPTAMAEDDESDPVPPLARVADWASVTLDLGDGPKRYRRETNTMPQWAGSCWYHLRYLDPTNTERFVDETVERYWLAKPGAAAGDGGVDLYVGGVEHAVLHLLYARFWQKVLYDLGHVSSKEPFKRLFNQGYIQADAFTDARGMYVPAAEVKQTDDGRFTHHGAPVDRRSGKMGKSLKNSVSPDEMYERFGADTLRVYEMAMGPLDADRPWHTDDIVGSHRFLQRLWRAVVDEGSGTVAVSDEQLDAEATRVLHRTIITLAAEYAGLRFNTAVARLIELTNYVSKRYGQAATPRALAEPLVLMVAPLAPHIAEELWTRLGHSESVSRAAFPVGDPALAAESERTIPVQVNGKVRFTLQVPDGAAEPVIRELLTAHPDYARQTEGRTIKKTIIVPGRIVNIALG.

Residues 19–53 (TAEHGTGAANATASPSGAVPPSGATATAGTGDEPG) form a disordered region. Residues 107 to 118 (PYPSGTGLHVGH) carry the 'HIGH' region motif. Residues 823 to 836 (GRFTHHGAPVDRRS) show a composition bias toward basic and acidic residues. The disordered stretch occupies residues 823-846 (GRFTHHGAPVDRRSGKMGKSLKNS). The 'KMSKS' region motif lies at 838–842 (KMGKS). Lys-841 contacts ATP.

This sequence belongs to the class-I aminoacyl-tRNA synthetase family.

It is found in the cytoplasm. The catalysed reaction is tRNA(Leu) + L-leucine + ATP = L-leucyl-tRNA(Leu) + AMP + diphosphate. The polypeptide is Leucine--tRNA ligase (Frankia alni (strain DSM 45986 / CECT 9034 / ACN14a)).